The sequence spans 494 residues: Putative NAD kinase 3 (494 aa).

It belongs to the NAD kinase family.

The enzyme catalyses NAD(+) + ATP = ADP + NADP(+) + H(+). The protein is Putative NAD kinase 3 of Oryza sativa subsp. japonica (Rice).